A 202-amino-acid chain; its full sequence is Orotate phosphoribosyltransferase (202 aa).

5-phospho-alpha-D-ribose 1-diphosphate is bound by residues lysine 93 and 113–121 (EDIITTGGS). Positions 117 and 145 each coordinate orotate.

This sequence belongs to the purine/pyrimidine phosphoribosyltransferase family. PyrE subfamily. In terms of assembly, homodimer. It depends on Mg(2+) as a cofactor.

It carries out the reaction orotidine 5'-phosphate + diphosphate = orotate + 5-phospho-alpha-D-ribose 1-diphosphate. It participates in pyrimidine metabolism; UMP biosynthesis via de novo pathway; UMP from orotate: step 1/2. In terms of biological role, catalyzes the transfer of a ribosyl phosphate group from 5-phosphoribose 1-diphosphate to orotate, leading to the formation of orotidine monophosphate (OMP). This is Orotate phosphoribosyltransferase from Campylobacter hominis (strain ATCC BAA-381 / DSM 21671 / CCUG 45161 / LMG 19568 / NCTC 13146 / CH001A).